Reading from the N-terminus, the 262-residue chain is MKDMSLVNSKVLLVGSARGIGFSVLEHLLQAGAQVMAADCEWQLLLEQSESLLGRYPDQLTLKKLDLAEPEAVREQVNQWAEQVAGFDHLVCCAGILHVAPLHEMPMEQVSSIFTVNAFGVLACMQGVASSMKARQQGSMVIIGSNAANTPRMSIGAYGASKAALHMLVKCIGMELAPYGIRCNLVSPGSTRTAMQQQLWTEQYGEAQVIAGDAAQFRLGIPLNKIAEPADIAQAVLFLLSDNAGHITLHDLRVDGGATLDH.

12–36 provides a ligand contact to NAD(+); it reads LLVGSARGIGFSVLEHLLQAGAQVM. S145 provides a ligand contact to substrate. Residue Y158 is the Proton acceptor of the active site.

Belongs to the short-chain dehydrogenases/reductases (SDR) family.

The catalysed reaction is (2S,3S)-2,3-dihydroxy-2,3-dihydrobenzoate + NAD(+) = 2,3-dihydroxybenzoate + NADH + H(+). It participates in siderophore biosynthesis; vibriobactin biosynthesis. Its function is as follows. Involved in an early step of the biosynthesis of the catechol siderophore vibriobactin. Vibriobactin is a chelating compound involved in transporting iron from the bacterial environment into the cell cytoplasm. The sequence is that of Vibriobactin-specific 2,3-dihydro-2,3-dihydroxybenzoate dehydrogenase (vibA) from Vibrio cholerae serotype O1 (strain ATCC 39315 / El Tor Inaba N16961).